The primary structure comprises 273 residues: NADPH-dependent 7-cyano-7-deazaguanine reductase (273 aa).

Position 81-83 (81-83 (VES)) interacts with substrate. 83-84 (SK) is a binding site for NADPH. The active-site Thioimide intermediate is the Cys-179. Asp-186 acts as the Proton donor in catalysis. 218–219 (AE) is a substrate binding site. 247–248 (RG) provides a ligand contact to NADPH.

The protein belongs to the GTP cyclohydrolase I family. QueF type 2 subfamily. Homodimer.

Its subcellular location is the cytoplasm. The enzyme catalyses 7-aminomethyl-7-carbaguanine + 2 NADP(+) = 7-cyano-7-deazaguanine + 2 NADPH + 3 H(+). It participates in tRNA modification; tRNA-queuosine biosynthesis. Catalyzes the NADPH-dependent reduction of 7-cyano-7-deazaguanine (preQ0) to 7-aminomethyl-7-deazaguanine (preQ1). In Rickettsia akari (strain Hartford), this protein is NADPH-dependent 7-cyano-7-deazaguanine reductase.